The chain runs to 168 residues: Alpha-amylase/trypsin inhibitor CM3 (168 aa).

An N-terminal signal peptide occupies residues 1-25 (MACKSSCSLLLLAAVLLSVLAAASA).

Belongs to the protease inhibitor I6 (cereal trypsin/alpha-amylase inhibitor) family. As to quaternary structure, subunit of the tetrameric inhibitor. In terms of processing, five disulfide bonds, which are essential for the inhibitor activity, are probably present. Developing endosperm.

It localises to the secreted. Its function is as follows. Alpha-amylase/trypsin inhibitor. It could be involved in insect defense mechanisms. The sequence is that of Alpha-amylase/trypsin inhibitor CM3 from Triticum aestivum (Wheat).